Reading from the N-terminus, the 172-residue chain is NADH-ubiquinone oxidoreductase chain 6 (172 aa).

A run of 6 helical transmembrane segments spans residues 1–21, 25–45, 48–68, 86–106, 108–128, and 141–161; these read MLSLVLCFFVMFLLGVAVVVL, PYFSALGLVFVAVSGCFIVLY, GTFLSLVLVLLYLGGMMVVFV, VIWFFVICVLCICFAGYMSFN, FFLDVSVACEGADYTGGIFGA, and LILVLAGWALLVCLFSVLVVV.

The protein belongs to the complex I subunit 6 family.

The protein resides in the mitochondrion membrane. It carries out the reaction a ubiquinone + NADH + 5 H(+)(in) = a ubiquinol + NAD(+) + 4 H(+)(out). Its function is as follows. Core subunit of the mitochondrial membrane respiratory chain NADH dehydrogenase (Complex I) that is believed to belong to the minimal assembly required for catalysis. Complex I functions in the transfer of electrons from NADH to the respiratory chain. The immediate electron acceptor for the enzyme is believed to be ubiquinone. In Petromyzon marinus (Sea lamprey), this protein is NADH-ubiquinone oxidoreductase chain 6 (MT-ND6).